Consider the following 334-residue polypeptide: Glyoxylate reductase (334 aa).

NADP(+) is bound by residues 158–161 (FGRI), 180–182 (SRT), and 239–241 (IAR). Residues arginine 241 and glutamate 270 contribute to the active site. The active-site Proton donor is the histidine 288. 288–290 (HIG) serves as a coordination point for NADP(+).

This sequence belongs to the D-isomer specific 2-hydroxyacid dehydrogenase family. GyaR subfamily. Homodimer.

Its subcellular location is the cytoplasm. It catalyses the reaction glycolate + NAD(+) = glyoxylate + NADH + H(+). In Thermococcus gammatolerans (strain DSM 15229 / JCM 11827 / EJ3), this protein is Glyoxylate reductase.